The primary structure comprises 668 residues: Protein ENTREP3 (668 aa).

The next 3 membrane-spanning stretches (helical) occupy residues 34–54 (LLTL…FSMV), 67–87 (SCPS…IVSW), and 91–111 (FTLV…LSMA). Residue asparagine 160 is glycosylated (N-linked (GlcNAc...) asparagine). Residues 174 to 194 (LFSVCGLTICAAIICTLSAIV) form a helical membrane-spanning segment. Phosphoserine occurs at positions 358 and 389. Disordered regions lie at residues 386–419 (FEES…PTAA), 442–503 (RVPR…SSDT), and 550–570 (SAEK…SGPA). Residues 398 to 407 (AARSYSCSAP) are compositionally biased toward low complexity. Phosphoserine is present on serine 493. Serine 574 is subject to Phosphoserine. Disordered regions lie at residues 597-620 (KAPD…WGRP) and 645-668 (GRRL…ETGL). Residues 655-668 (HSLSLNGGSRETGL) show a composition bias toward polar residues.

Belongs to the ENTREP family. May interact with WWOX. Widely expressed.

The protein resides in the membrane. This Homo sapiens (Human) protein is Protein ENTREP3.